The chain runs to 189 residues: Threonylcarbamoyl-AMP synthase (189 aa).

In terms of domain architecture, YrdC-like spans 9-189 (ASAQRKLSVY…IDGETGKRLR (181 aa)).

It belongs to the SUA5 family. TsaC subfamily.

It localises to the cytoplasm. The catalysed reaction is L-threonine + hydrogencarbonate + ATP = L-threonylcarbamoyladenylate + diphosphate + H2O. Functionally, required for the formation of a threonylcarbamoyl group on adenosine at position 37 (t(6)A37) in tRNAs that read codons beginning with adenine. Catalyzes the conversion of L-threonine, HCO(3)(-)/CO(2) and ATP to give threonylcarbamoyl-AMP (TC-AMP) as the acyladenylate intermediate, with the release of diphosphate. This chain is Threonylcarbamoyl-AMP synthase, found in Neisseria meningitidis serogroup C (strain 053442).